The following is a 270-amino-acid chain: NAD(P)H-hydrate epimerase (270 aa).

The YjeF N-terminal domain occupies 25–234; that stretch reads FQQLMDLMQN…DLLAPEAIYQ (210 aa). Residue 73–77 participates in (6S)-NADPHX binding; it reads DNGGQ. K(+)-binding residues include Asn-74 and Asp-144. (6S)-NADPHX is bound by residues 148–154 and Glu-177; that span reads GVGLYGH. Thr-180 contributes to the K(+) binding site.

The protein belongs to the NnrE/AIBP family. Requires K(+) as cofactor.

It catalyses the reaction (6R)-NADHX = (6S)-NADHX. The enzyme catalyses (6R)-NADPHX = (6S)-NADPHX. In terms of biological role, catalyzes the epimerization of the S- and R-forms of NAD(P)HX, a damaged form of NAD(P)H that is a result of enzymatic or heat-dependent hydration. This is a prerequisite for the S-specific NAD(P)H-hydrate dehydratase to allow the repair of both epimers of NAD(P)HX. The protein is NAD(P)H-hydrate epimerase of Legionella pneumophila subsp. pneumophila (strain Philadelphia 1 / ATCC 33152 / DSM 7513).